Reading from the N-terminus, the 164-residue chain is UPF0304 protein NT01EI_2691 (164 aa).

This sequence belongs to the UPF0304 family.

This Edwardsiella ictaluri (strain 93-146) protein is UPF0304 protein NT01EI_2691.